Here is a 2472-residue protein sequence, read N- to C-terminus: Spectrin alpha chain, non-erythrocytic 1 (2472 aa).

N-acetylmethionine is present on M1. Spectrin repeat units follow at residues R45–L146, K150–L251, E256–D358, Y361–Q465, D468–A570, H574–E676, Q679–A781, R785–D888, and Q891–A961. S587 carries the post-translational modification Phosphoserine. N6-acetyllysine is present on K637. K803 bears the N6-acetyllysine mark. 6 positions are modified to phosphoserine: S924, S982, S999, S1029, S1031, and S1041. Residues T967–P1026 enclose the SH3 domain. Residues L1096–E1166 form a Spectrin 10 repeat. A Phosphotyrosine modification is found at Y1176. Phosphoserine occurs at positions 1190, 1207, 1217, 1291, 1306, 1323, and 1338. The Spectrin 11 repeat unit spans residues H1233 to G1336. Spectrin repeat units lie at residues H1339–L1441 and E1446–E1549. Residue K1519 is modified to N6-acetyllysine. 5 positions are modified to phosphoserine: S1550, S1557, S1578, S1615, and S1647. 7 Spectrin repeats span residues T1552–E1656, K1659–E1762, H1764–E1868, E1871–E1974, F1978–E2081, L2092–Q2194, and L2206–Q2310. Position 2020 is a phosphothreonine (T2020). K2052 carries the post-translational modification N6-acetyllysine. T2066 is modified (phosphothreonine). EF-hand domains lie at E2323–D2358, E2366–E2401, and K2404–D2439. Ca(2+) contacts are provided by D2336, D2338, S2340, R2342, E2347, D2379, N2381, D2383, H2385, and E2390. The residue at position 2421 (K2421) is an N6-acetyllysine.

This sequence belongs to the spectrin family. As to quaternary structure, like erythrocyte spectrin, the spectrin-like proteins are capable of forming dimers which can further associate to tetramers. Interacts (via C-terminal spectrin repeats) with TRPC4. Interacts with CALM and EMD. Interacts with isoform 1 of ACP1. Identified in a complex with ACTN4, CASK, IQGAP1, MAGI2, NPHS1 and SPTBN1. Interacts with SHANK3 (via ANK repeats). Interacts with CLN3; this interaction regulates the fodrin localization at the plasma membrane. In terms of processing, phosphorylation of Tyr-1176 decreases sensitivity to cleavage by calpain in vitro.

It localises to the cytoplasm. It is found in the cytoskeleton. Its subcellular location is the cell cortex. Functionally, fodrin, which seems to be involved in secretion, interacts with calmodulin in a calcium-dependent manner and is thus candidate for the calcium-dependent movement of the cytoskeleton at the membrane. This chain is Spectrin alpha chain, non-erythrocytic 1 (Sptan1), found in Mus musculus (Mouse).